Reading from the N-terminus, the 700-residue chain is Centrosomal protein of 63 kDa (700 aa).

Met1 is subject to N-acetylmethionine. Coiled-coil stretches lie at residues 73–283 (KEVG…ETFI) and 343–533 (LQAE…MCKK). 3 positions are modified to phosphoserine: Ser278, Lys488, and Leu492. The disordered stretch occupies residues 570–603 (QYKTGHHSPRGQTLDSIDPVARGPSPLSSHISPG). Residues 593–603 (PSPLSSHISPG) are compositionally biased toward low complexity.

It belongs to the CEP63 family. In terms of assembly, interacts with CEP152 and CDK1; these interactions recruit both ligands to centrosomes. Interacts with CDK2, CDK5RAP2, WDR62, CEP90, KIAA0753/moonraker and CCDC14. CEP63, CDK5RAP2, CEP152, WDR62 are proposed to form a stepwise assembled complex at the centrosome forming a ring near parental centrioles. Interacts with CCDC57; the interaction is required for their location to proximal end of centrioles. Interacts with FXR1; promoting its stabilization. In terms of processing, polyubiquitinated via 'Lys-48'-linked ubiquitin, leading to its degradation. Deubiquitinated by USP36, promoting its stabilization.

The protein localises to the cytoplasm. Its subcellular location is the cytoskeleton. The protein resides in the microtubule organizing center. It is found in the centrosome. It localises to the centriole. The protein localises to the centriolar satellite. Required for normal spindle assembly. Plays a key role in mother-centriole-dependent centriole duplication; the function also seems to involve CEP152, CDK5RAP2 and WDR62 through a stepwise assembled complex at the centrosome that recruits CDK2 required for centriole duplication. Reported to be required for centrosomal recruitment of CEP152; however, this function has been questioned. Also recruits CDK1 to centrosomes. Plays a role in DNA damage response. Following DNA damage, such as double-strand breaks (DSBs), is removed from centrosomes; this leads to the inactivation of spindle assembly and delay in mitotic progression. Promotes stabilization of FXR1 protein by inhibiting FXR1 ubiquitination. The protein is Centrosomal protein of 63 kDa of Mus musculus (Mouse).